Here is a 348-residue protein sequence, read N- to C-terminus: Bifunctional nitrilase/nitrile hydratase NIT4B (348 aa).

Positions 29-300 (VRATVVQAST…EALISADLDL (272 aa)) constitute a CN hydrolase domain. Glu-69 acts as the Proton acceptor in catalysis. The Proton donor role is filled by Lys-156. Catalysis depends on Cys-190, which acts as the Nucleophile.

Belongs to the carbon-nitrogen hydrolase superfamily. Nitrilase family. Expressed in roots, stems, cotyledons, leaves and flowers.

The enzyme catalyses a nitrile + 2 H2O = a carboxylate + NH4(+). It catalyses the reaction 3-cyano-L-alanine + 2 H2O = L-aspartate + NH4(+). Highly specific for beta-cyano-L-alanine (Ala(CN)). Low activity with 3-phenylpropionitrile (PPN). Not associated with auxin production but may be involved in cyanide detoxification. This Nicotiana tabacum (Common tobacco) protein is Bifunctional nitrilase/nitrile hydratase NIT4B (NIT4B).